The following is a 492-amino-acid chain: Histone-lysine N-methyltransferase ASHH1 (492 aa).

Residues 36 to 87 form the AWS domain; that stretch reads EDISICECKFDFGDPDSACGERCLNVITNTECTPGYCPCGVYCKNQKFQKCE. Residues 84 to 206 enclose the SET domain; sequence QKCEYAKTKL…PRTELAYDYN (123 aa). The Post-SET domain maps to 213–229; that stretch reads AKVRCLCGAVACSGFLG. Residues 259–340 are disordered; that stretch reads SAEDELTSEP…NSQEDSSPKT (82 aa). The span at 266-275 shows a compositional bias: polar residues; sequence SEPSKNGESN. Residues 277 to 290 show a composition bias toward basic and acidic residues; that stretch reads NEEKEKDISTENHL. Polar residues predominate over residues 291–306; sequence ESTALNIQQQSDSTPT. Basic and acidic residues predominate over residues 317–326; sequence VKTETSEDMK. The segment covering 328–339 has biased composition (polar residues); sequence LSQNSQEDSSPK.

The protein belongs to the class V-like SAM-binding methyltransferase superfamily. Histone-lysine methyltransferase family. SET2 subfamily.

It localises to the nucleus. The protein localises to the chromosome. It is found in the centromere. It carries out the reaction L-lysyl(4)-[histone H3] + 3 S-adenosyl-L-methionine = N(6),N(6),N(6)-trimethyl-L-lysyl(4)-[histone H3] + 3 S-adenosyl-L-homocysteine + 3 H(+). In terms of biological role, histone methyltransferase involved in regulation of flowering time. Required for the expression of the SOC1/AGL20 gene. Required for histone H3 trimethylation on 'Lys-4' (H3K4me3) at the SOC1 locus. Prevents trimethylation on 'Lys-27' (H3K27me3) at the same locus. The protein is Histone-lysine N-methyltransferase ASHH1 (ASHH1) of Arabidopsis thaliana (Mouse-ear cress).